Reading from the N-terminus, the 837-residue chain is Ribosome biogenesis ATPase RIX7 (837 aa).

Disordered regions lie at residues 36–56 (RSLR…EEDE) and 149–207 (ITST…LKSL). S42 is modified (phosphoserine). Acidic residues predominate over residues 43-56 (QGEEGENNEGEEDE). Residues 149-163 (ITSTWSKSGSVSESI) show a composition bias toward polar residues. A compositionally biased stretch (basic residues) spans 176 to 192 (KSKKRSKEGTCKVKRQK). 246–253 (GPPGCGKT) provides a ligand contact to ATP. The tract at residues 443–468 (PTTATDSSEDNMEIDETANGDESSLK) is disordered. Residues 449–461 (SSEDNMEIDETAN) show a composition bias toward acidic residues. 574–581 (GPPGCGKT) is a binding site for ATP.

The protein belongs to the AAA ATPase family.

Its subcellular location is the nucleus. It is found in the nucleolus. Functionally, involved in ribosome biogenesis. Seems to be required for restructuring nucleoplasmic 60S pre-ribosomal particles to make them competent for nuclear export. This Saccharomyces cerevisiae (strain ATCC 204508 / S288c) (Baker's yeast) protein is Ribosome biogenesis ATPase RIX7 (RIX7).